Consider the following 87-residue polypeptide: Small ribosomal subunit protein uS17 (87 aa).

The protein belongs to the universal ribosomal protein uS17 family. As to quaternary structure, part of the 30S ribosomal subunit.

One of the primary rRNA binding proteins, it binds specifically to the 5'-end of 16S ribosomal RNA. This Neisseria gonorrhoeae (strain ATCC 700825 / FA 1090) protein is Small ribosomal subunit protein uS17.